The primary structure comprises 65 residues: Large ribosomal subunit protein bL35 (65 aa).

Over residues 1–11 the composition is skewed to basic residues; it reads MPKIKTRRSAA. The tract at residues 1–25 is disordered; the sequence is MPKIKTRRSAAKRFSVTGSGKFRRR.

The protein belongs to the bacterial ribosomal protein bL35 family.

The polypeptide is Large ribosomal subunit protein bL35 (Nitratidesulfovibrio vulgaris (strain ATCC 29579 / DSM 644 / CCUG 34227 / NCIMB 8303 / VKM B-1760 / Hildenborough) (Desulfovibrio vulgaris)).